The primary structure comprises 158 residues: Crossover junction endodeoxyribonuclease RuvC (158 aa).

Catalysis depends on residues aspartate 7, glutamate 67, and aspartate 140. The Mg(2+) site is built by aspartate 7, glutamate 67, and aspartate 140.

This sequence belongs to the RuvC family. Homodimer which binds Holliday junction (HJ) DNA. The HJ becomes 2-fold symmetrical on binding to RuvC with unstacked arms; it has a different conformation from HJ DNA in complex with RuvA. In the full resolvosome a probable DNA-RuvA(4)-RuvB(12)-RuvC(2) complex forms which resolves the HJ. Mg(2+) is required as a cofactor.

It localises to the cytoplasm. It carries out the reaction Endonucleolytic cleavage at a junction such as a reciprocal single-stranded crossover between two homologous DNA duplexes (Holliday junction).. Its function is as follows. The RuvA-RuvB-RuvC complex processes Holliday junction (HJ) DNA during genetic recombination and DNA repair. Endonuclease that resolves HJ intermediates. Cleaves cruciform DNA by making single-stranded nicks across the HJ at symmetrical positions within the homologous arms, yielding a 5'-phosphate and a 3'-hydroxyl group; requires a central core of homology in the junction. The consensus cleavage sequence is 5'-(A/T)TT(C/G)-3'. Cleavage occurs on the 3'-side of the TT dinucleotide at the point of strand exchange. HJ branch migration catalyzed by RuvA-RuvB allows RuvC to scan DNA until it finds its consensus sequence, where it cleaves and resolves the cruciform DNA. This chain is Crossover junction endodeoxyribonuclease RuvC, found in Dictyoglomus thermophilum (strain ATCC 35947 / DSM 3960 / H-6-12).